Consider the following 162-residue polypeptide: Putative pre-16S rRNA nuclease (162 aa).

This sequence belongs to the YqgF nuclease family.

It is found in the cytoplasm. Its function is as follows. Could be a nuclease involved in processing of the 5'-end of pre-16S rRNA. The protein is Putative pre-16S rRNA nuclease of Brucella melitensis biotype 1 (strain ATCC 23456 / CCUG 17765 / NCTC 10094 / 16M).